Reading from the N-terminus, the 286-residue chain is Orotidine 5'-phosphate decarboxylase (286 aa).

Catalysis depends on K97, which acts as the Proton donor.

Belongs to the OMP decarboxylase family. Type 2 subfamily.

The enzyme catalyses orotidine 5'-phosphate + H(+) = UMP + CO2. It participates in pyrimidine metabolism; UMP biosynthesis via de novo pathway; UMP from orotate: step 2/2. The chain is Orotidine 5'-phosphate decarboxylase (pyrF) from Clostridium acetobutylicum (strain ATCC 824 / DSM 792 / JCM 1419 / IAM 19013 / LMG 5710 / NBRC 13948 / NRRL B-527 / VKM B-1787 / 2291 / W).